The sequence spans 235 residues: Purine nucleoside phosphorylase DeoD-type (235 aa).

A purine D-ribonucleoside is bound at residue His-4. Residues Gly-20, Arg-24, Arg-43, and 87–90 (RVGT) contribute to the phosphate site. Residues Glu-162, 179-181 (EME), and 203-204 (SD) contribute to the a purine D-ribonucleoside site. The Proton donor role is filled by Asp-204.

The protein belongs to the PNP/UDP phosphorylase family. Homohexamer; trimer of homodimers.

It catalyses the reaction a purine D-ribonucleoside + phosphate = a purine nucleobase + alpha-D-ribose 1-phosphate. The enzyme catalyses a purine 2'-deoxy-D-ribonucleoside + phosphate = a purine nucleobase + 2-deoxy-alpha-D-ribose 1-phosphate. Catalyzes the reversible phosphorolytic breakdown of the N-glycosidic bond in the beta-(deoxy)ribonucleoside molecules, with the formation of the corresponding free purine bases and pentose-1-phosphate. The chain is Purine nucleoside phosphorylase DeoD-type from Bacillus cereus (strain B4264).